The chain runs to 421 residues: 3-isopropylmalate dehydratase large subunit (421 aa).

[4Fe-4S] cluster-binding residues include C302, C362, and C365.

Belongs to the aconitase/IPM isomerase family. LeuC type 2 subfamily. In terms of assembly, heterodimer of LeuC and LeuD. [4Fe-4S] cluster is required as a cofactor.

It carries out the reaction (2R,3S)-3-isopropylmalate = (2S)-2-isopropylmalate. Its pathway is amino-acid biosynthesis; L-leucine biosynthesis; L-leucine from 3-methyl-2-oxobutanoate: step 2/4. In terms of biological role, catalyzes the isomerization between 2-isopropylmalate and 3-isopropylmalate, via the formation of 2-isopropylmaleate. This is 3-isopropylmalate dehydratase large subunit from Campylobacter fetus subsp. fetus (strain 82-40).